We begin with the raw amino-acid sequence, 858 residues long: Heat shock protein 105 kDa (858 aa).

S2 bears the N-acetylserine mark. Residue K471 is modified to N6-acetyllysine. 2 disordered regions span residues 500 to 585 and 801 to 858; these read KVPT…PPEA and VTQP…MDLD. The span at 504-515 shows a compositional bias: acidic residues; sequence EEEDGSSVEADM. A phosphoserine mark is found at S509 and S510. A compositionally biased stretch (polar residues) spans 533–555; the sequence is QQDNSEAGTQPQVQTDGQQTSQS. S558 is subject to Phosphoserine. T562 is subject to Phosphothreonine. Basic and acidic residues-rich tracts occupy residues 564-585 and 806-815; these read EENK…PPEA and PKIESPKLER. S810 carries the post-translational modification Phosphoserine. T816 is modified (phosphothreonine).

It belongs to the heat shock protein 70 family. In terms of assembly, interacts with HSPA8/HSC70. Interacts with HSPA1A (via NBD) and HSPA1B (via NBD). Post-translationally, phosphorylation on Ser-509 may be important for regulation of the HSPA8/HSC70 chaperone activity.

Its subcellular location is the cytoplasm. Functionally, acts as a nucleotide-exchange factor (NEF) for chaperone proteins HSPA1A and HSPA1B, promoting the release of ADP from HSPA1A/B thereby triggering substrate release. Prevents the aggregation of denatured proteins in cells under severe stress, on which the ATP levels decrease markedly. Inhibits HSPA8/HSC70 ATPase and chaperone activities. The chain is Heat shock protein 105 kDa (Hsph1) from Rattus norvegicus (Rat).